We begin with the raw amino-acid sequence, 150 residues long: Leukotriene C4 synthase (150 aa).

The Cytoplasmic portion of the chain corresponds to 1–6 (MKDEVA). The chain crosses the membrane as a helical span at residues 7 to 27 (LLATVTLLGVLLQAYFSLQVI). Residues 28-48 (RARRAHRVSPPLTTGPPEFER) are Lumenal-facing. Position 30 (Arg30) interacts with glutathione. The Proton donor role is filled by Arg31. Position 36 is a phosphoserine (Ser36). Residues 49-69 (VYRAQVNCSEYFPLFLATLWV) form a helical membrane-spanning segment. Glutathione-binding positions include 51-55 (RAQVN) and 58-59 (EY). Over 70–73 (AGVY) the chain is Cytoplasmic. The helical transmembrane segment at 74 to 94 (FHEGAAALCGLVYLFTRLRYF) threads the bilayer. A glutathione-binding site is contributed by 93 to 97 (YFWGY). Residues 95–104 (WGYARSAQLR) are Lumenal-facing. The active-site Proton acceptor is the Arg104. The chain crosses the membrane as a helical span at residues 105 to 124 (LAPLYASARALWLLLALATL). Residues 125-150 (GLLAHFLPAAARAALLRLLRALLRTA) are Cytoplasmic-facing.

This sequence belongs to the MAPEG family. In terms of assembly, homotrimer. Interacts with ALOX5AP and ALOX5. Phosphorylation at Ser-36 by RPS6KB1 inhibits the leukotriene-C4 synthase activity.

The protein localises to the nucleus outer membrane. The protein resides in the endoplasmic reticulum membrane. It is found in the nucleus membrane. The catalysed reaction is leukotriene C4 = leukotriene A4 + glutathione. It carries out the reaction (13S,14S)-epoxy-(4Z,7Z,9E,11E,16Z,19Z)-docosahexaenoate + glutathione = (13R)-S-glutathionyl-(14S)-hydroxy-(4Z,7Z,9E,11E,16Z,19Z)-docosahexaenoate. It participates in lipid metabolism; leukotriene C4 biosynthesis. With respect to regulation, inhibited by MK886. Functionally, catalyzes the conjugation of leukotriene A4 with reduced glutathione (GSH) to form leukotriene C4 with high specificity. Can also catalyze the transfer of a glutathionyl group from glutathione (GSH) to 13(S),14(S)-epoxy-docosahexaenoic acid to form maresin conjugate in tissue regeneration 1 (MCTR1), a bioactive lipid mediator that possess potent anti-inflammatory and proresolving actions. The protein is Leukotriene C4 synthase (LTC4S) of Cavia porcellus (Guinea pig).